The primary structure comprises 277 residues: Inositol monophosphatase 1 (277 aa).

Residues Glu-70, Asp-90, Ile-92, and Asp-93 each contribute to the Mg(2+) site. Glu-70 provides a ligand contact to substrate. Residues Ile-92 to Thr-95, Gly-194 to Ala-196, Glu-213, and Asp-220 contribute to the substrate site. Asp-220 lines the Mg(2+) pocket.

This sequence belongs to the inositol monophosphatase superfamily. In terms of assembly, homodimer. The cofactor is Mg(2+). As to expression, ubiquitous.

The protein resides in the cytoplasm. It carries out the reaction a myo-inositol phosphate + H2O = myo-inositol + phosphate. The catalysed reaction is 1D-myo-inositol 1-phosphate + H2O = myo-inositol + phosphate. The enzyme catalyses 1D-myo-inositol 2-phosphate + H2O = myo-inositol + phosphate. It catalyses the reaction 1D-myo-inositol 3-phosphate + H2O = myo-inositol + phosphate. It carries out the reaction 1D-myo-inositol 4-phosphate + H2O = myo-inositol + phosphate. The catalysed reaction is 1D-myo-inositol 5-phosphate + H2O = myo-inositol + phosphate. The enzyme catalyses 1D-myo-inositol 6-phosphate + H2O = myo-inositol + phosphate. It catalyses the reaction scyllo-inositol 1-phosphate + H2O = scyllo-inositol + phosphate. It carries out the reaction alpha-D-galactose 1-phosphate + H2O = D-galactose + phosphate. The catalysed reaction is alpha-D-glucose 1-phosphate + H2O = D-glucose + phosphate. The enzyme catalyses D-glucose 6-phosphate + H2O = D-glucose + phosphate. It catalyses the reaction beta-D-fructose 1-phosphate + H2O = D-fructose + phosphate. It carries out the reaction glycerol 2-phosphate + H2O = glycerol + phosphate. The catalysed reaction is adenosine 2'-phosphate + H2O = adenosine + phosphate. Its pathway is polyol metabolism; myo-inositol biosynthesis; myo-inositol from D-glucose 6-phosphate: step 2/2. With respect to regulation, activity with myo-inositol monophosphate and D-galactose 1-phosphate is inhibited by Li(+), Ca(2+) and Mn(2+), but also by Mg(2+) at concentrations above 3 mM. Phosphatase involved in the dephosphorylation of myo-inositol monophosphate to generate myo-inositol. Is also able to dephosphorylate scyllo-inositol-phosphate, myo-inositol 1,4-diphosphate, scyllo-inositol-1,3-diphosphate and scyllo-inositol-1,4-diphosphate. Also dephosphorylates in vitro other sugar-phosphates including D-galactose-1-phosphate, glucose-1-phosphate, glucose-6-phosphate, fructose-1-phosphate, beta-glycerophosphate and 2'-AMP. Responsible for the provision of inositol required for synthesis of phosphatidylinositol and polyphosphoinositides, and involved in maintaining normal brain function. Has been implicated as the pharmacological target for lithium Li(+) action in brain. Is equally active with myo-inositol monophosphate and D-galactose 1-phosphate. This chain is Inositol monophosphatase 1 (Impa1), found in Rattus norvegicus (Rat).